Here is a 386-residue protein sequence, read N- to C-terminus: MHLHEYQAKDLLASYDVPIPPYWVVSSEEEGELLITKSGLDSAVVKVQVHAGGRGKHGGVIVAKSSAGILQAVAKLLGMHFTSNQTADGFLPVEKVLISPLVAIQREYYVAVIMDRKHRCPVLMLSKAGGMDIEEVAHSSPEQILTLPLTSYGHIYSYQLRQATKFMEWEGEVMHQGVQLIKKLAKCFYENDVSLLEINPLVLTLEGELLVLDSKITIDDNALYRHPNLEVLYDPSQENVRDVLAKQIGLSYIALSGNIGCIVNGAGLAMSTLDILKLHGGNAANFLDVGGGASQKQIQEAVSLVLSDESVKVLFINIFGGIMDCSVVASGLVAVMETRDQVVPTVIRLEGTNVELGKEIVQQSGIPCQFVSSMEEGARRAVELSM.

Positions 9–244 constitute an ATP-grasp domain; sequence KDLLASYDVP…PSQENVRDVL (236 aa). Residues K46, 53–55, V102, and E107 each bind ATP; that span reads GRG. The Mg(2+) site is built by N199 and D213. Substrate-binding positions include N264 and 321–323; that span reads GIM.

It belongs to the succinate/malate CoA ligase beta subunit family. In terms of assembly, heterotetramer of two alpha and two beta subunits. Requires Mg(2+) as cofactor.

It carries out the reaction succinate + ATP + CoA = succinyl-CoA + ADP + phosphate. The enzyme catalyses GTP + succinate + CoA = succinyl-CoA + GDP + phosphate. Its pathway is carbohydrate metabolism; tricarboxylic acid cycle; succinate from succinyl-CoA (ligase route): step 1/1. Succinyl-CoA synthetase functions in the citric acid cycle (TCA), coupling the hydrolysis of succinyl-CoA to the synthesis of either ATP or GTP and thus represents the only step of substrate-level phosphorylation in the TCA. The beta subunit provides nucleotide specificity of the enzyme and binds the substrate succinate, while the binding sites for coenzyme A and phosphate are found in the alpha subunit. The protein is Succinate--CoA ligase [ADP-forming] subunit beta of Chlamydia pneumoniae (Chlamydophila pneumoniae).